We begin with the raw amino-acid sequence, 217 residues long: tRNA (guanine-N(7)-)-methyltransferase (217 aa).

S-adenosyl-L-methionine is bound by residues glutamate 44, glutamate 69, aspartate 96, and aspartate 118. The active site involves aspartate 118. Substrate is bound at residue lysine 122. Residues 124–129 (RHEKRR) are interaction with RNA. Residues aspartate 154 and 191–194 (TEYE) contribute to the substrate site.

The protein belongs to the class I-like SAM-binding methyltransferase superfamily. TrmB family.

It carries out the reaction guanosine(46) in tRNA + S-adenosyl-L-methionine = N(7)-methylguanosine(46) in tRNA + S-adenosyl-L-homocysteine. The protein operates within tRNA modification; N(7)-methylguanine-tRNA biosynthesis. Functionally, catalyzes the formation of N(7)-methylguanine at position 46 (m7G46) in tRNA. In Bacillus velezensis (strain DSM 23117 / BGSC 10A6 / LMG 26770 / FZB42) (Bacillus amyloliquefaciens subsp. plantarum), this protein is tRNA (guanine-N(7)-)-methyltransferase.